Reading from the N-terminus, the 284-residue chain is Bifunctional protein FolD (284 aa).

Residues Gly-164–Ser-166 and Ser-189 contribute to the NADP(+) site.

Belongs to the tetrahydrofolate dehydrogenase/cyclohydrolase family. In terms of assembly, homodimer.

The enzyme catalyses (6R)-5,10-methylene-5,6,7,8-tetrahydrofolate + NADP(+) = (6R)-5,10-methenyltetrahydrofolate + NADPH. The catalysed reaction is (6R)-5,10-methenyltetrahydrofolate + H2O = (6R)-10-formyltetrahydrofolate + H(+). It functions in the pathway one-carbon metabolism; tetrahydrofolate interconversion. Functionally, catalyzes the oxidation of 5,10-methylenetetrahydrofolate to 5,10-methenyltetrahydrofolate and then the hydrolysis of 5,10-methenyltetrahydrofolate to 10-formyltetrahydrofolate. The sequence is that of Bifunctional protein FolD from Listeria monocytogenes serovar 1/2a (strain ATCC BAA-679 / EGD-e).